Reading from the N-terminus, the 305-residue chain is Fatty acid elongase 1 (305 aa).

The next 7 helical transmembrane spans lie at 24 to 44, 80 to 100, 129 to 149, 158 to 178, 183 to 203, 217 to 237, and 257 to 277; these read MIAN…FVFI, VVWN…VTPV, FWMG…IFLV, FLHW…YCVG, IWVA…FALA, YITI…IFAL, and IQLV…VASY. The short motif at 160 to 164 is the HxxHH motif element; it reads HWYHH. His163 functions as the Nucleophile in the catalytic mechanism. The tract at residues 284 to 305 is disordered; the sequence is PTVGGPSSTAGVSNGSVEKKVK. Polar residues predominate over residues 288 to 299; it reads GPSSTAGVSNGS. N-linked (GlcNAc...) asparagine glycosylation occurs at Asn297.

This sequence belongs to the ELO family.

It is found in the endoplasmic reticulum membrane. It catalyses the reaction an acyl-CoA + malonyl-CoA + H(+) = a 3-oxoacyl-CoA + CO2 + CoA. It functions in the pathway lipid metabolism; fatty acid biosynthesis. In terms of biological role, involved in the synthesis of fatty acids. Elongates C4 fatty acids to C10. This is Fatty acid elongase 1 from Trypanosoma brucei brucei (strain 927/4 GUTat10.1).